The sequence spans 126 residues: Large ribosomal subunit protein bL12 (126 aa).

This sequence belongs to the bacterial ribosomal protein bL12 family. Homodimer. Part of the ribosomal stalk of the 50S ribosomal subunit. Forms a multimeric L10(L12)X complex, where L10 forms an elongated spine to which 2 to 4 L12 dimers bind in a sequential fashion. Binds GTP-bound translation factors.

In terms of biological role, forms part of the ribosomal stalk which helps the ribosome interact with GTP-bound translation factors. Is thus essential for accurate translation. This is Large ribosomal subunit protein bL12 from Bordetella avium (strain 197N).